Consider the following 356-residue polypeptide: Protein SEC13 homolog (356 aa).

WD repeat units lie at residues 11–50 (EHED…KALA), 54–95 (GHQG…DWTK), 101–142 (NHDS…GVWD), 149–205 (AHTI…WVEE), 210–253 (AHSD…SEWT), and 259–298 (TFDD…QWIR). The tract at residues 307 to 356 (IQSKQPSHLPHSHSQQQQALQQHQQQAPSHPGPSSDSEHSSNLSNSQLSN) is disordered. Positions 308 to 356 (QSKQPSHLPHSHSQQQQALQQHQQQAPSHPGPSSDSEHSSNLSNSQLSN) are enriched in low complexity.

The protein belongs to the WD repeat SEC13 family. In terms of assembly, probable component of the nuclear pore complex (NPC). Component of the GATOR complex consisting of mio, Nup44A/Seh1, Im11, Nplr3, Nplr2, Wdr24, Wdr59 and Sec13. Within the GATOR complex, probable component of the GATOR2 subcomplex which is likely composed of mio, Nup44A/Seh1, Wdr24, Wdr59 and Sec13. Interacts with msk. Interacts (preferentially when phosphorylated) with Mad. The GATOR2 complex associates with unmet in the absence of S-adenosyl-L-methionine; the mio-Wdr24-Nup44A subcomplex is essential and sufficient for this interaction while Wdr59 and Sec13 are dispensable. This association acts as a nutrient sensor to inhibit mTORC1 signaling in the absence of methionine. As to expression, salivary glands.

It localises to the nucleus envelope. Its subcellular location is the nucleus. It is found in the nucleoplasm. The protein resides in the cytoplasm. The protein localises to the cytoskeleton. It localises to the microtubule organizing center. Its subcellular location is the centrosome. It is found in the nuclear pore complex. The protein resides in the cytoplasmic vesicle. The protein localises to the COPII-coated vesicle membrane. It localises to the endoplasmic reticulum membrane. Its subcellular location is the lysosome membrane. Functionally, functions as a component of the nuclear pore complex (NPC) and the COPII coat. At the endoplasmic reticulum, SEC13 is involved in the biogenesis of COPII-coated vesicles. Recruited to transcriptionally active chromatin at the time of transcription initiation by RNA polymerase II. Required for proper expression of ecdysone-responsive genes such as Eip74EF and Eip75B during larval development. Required for reactivation of transcription after heat shock. Required for nuclear import of phosphorylated Mad via importin msk. Has no role in classical nuclear localization signal (cNLS)-dependent nuclear import via importin-beta. Its function is as follows. A component of the GATOR subcomplex GATOR2 which functions as an activator of the amino acid-sensing branch of the mTORC1 signaling pathway. The two GATOR subcomplexes, GATOR1 and GATOR2, regulate the mTORC1 pathway in order to mediate metabolic homeostasis, female gametogenesis and the response to amino acid limitation and complete starvation. GATOR2 activates the mTORC1 signaling pathway through the inhibition of the GATOR1 subcomplex, controlling the switch to cell proliferation and growth under nutrient replete conditions and during female oocyte development. The chain is Protein SEC13 homolog from Drosophila melanogaster (Fruit fly).